The following is a 101-amino-acid chain: Large ribosomal subunit protein eL30 (101 aa).

This sequence belongs to the eukaryotic ribosomal protein eL30 family.

In Pyrobaculum islandicum (strain DSM 4184 / JCM 9189 / GEO3), this protein is Large ribosomal subunit protein eL30.